The chain runs to 48 residues: Sperm protamine R3 isoform 1 (48 aa).

Positions 1 to 29 (ARRRHSMKKKRKSVRRRKTRKNQRKRKNS) are enriched in basic residues. Positions 1 to 48 (ARRRHSMKKKRKSVRRRKTRKNQRKRKNSLGRSFKQHGFLKQPPRFRP) are disordered.

In terms of tissue distribution, testis.

It localises to the nucleus. It is found in the chromosome. Protamines substitute for histones in the chromatin of sperm during the haploid phase of spermatogenesis. They compact sperm DNA into a highly condensed, stable and inactive complex. This chain is Sperm protamine R3 isoform 1, found in Hydrolagus colliei (Spotted ratfish).